The chain runs to 307 residues: Adenosylcobinamide-GDP ribazoletransferase (307 aa).

The next 8 membrane-spanning stretches (helical) occupy residues 22-42, 58-78, 80-100, 137-157, 161-181, 212-232, 248-268, and 283-303; these read PLFE…VPGA, PFVG…IGPI, GVIH…WELL, FGLA…ASLV, VWWM…VTAL, TAAL…LTSV, AWLG…AALF, and CIGA…AVVA.

It belongs to the CobS family. Mg(2+) is required as a cofactor.

The protein resides in the cell membrane. It catalyses the reaction alpha-ribazole + adenosylcob(III)inamide-GDP = adenosylcob(III)alamin + GMP + H(+). It carries out the reaction alpha-ribazole 5'-phosphate + adenosylcob(III)inamide-GDP = adenosylcob(III)alamin 5'-phosphate + GMP + H(+). The protein operates within cofactor biosynthesis; adenosylcobalamin biosynthesis; adenosylcobalamin from cob(II)yrinate a,c-diamide: step 7/7. Joins adenosylcobinamide-GDP and alpha-ribazole to generate adenosylcobalamin (Ado-cobalamin). Also synthesizes adenosylcobalamin 5'-phosphate from adenosylcobinamide-GDP and alpha-ribazole 5'-phosphate. The chain is Adenosylcobinamide-GDP ribazoletransferase from Corynebacterium glutamicum (strain ATCC 13032 / DSM 20300 / JCM 1318 / BCRC 11384 / CCUG 27702 / LMG 3730 / NBRC 12168 / NCIMB 10025 / NRRL B-2784 / 534).